The following is a 165-amino-acid chain: Myosin regulatory light chain 2, ventricular/cardiac muscle isoform (165 aa).

A N,N,N-trimethylserine modification is found at Ser2. At Asn14 the chain carries Deamidated asparagine. Phosphoserine occurs at positions 15 and 19. 3 EF-hand domains span residues Thr24–Val59, Asp94–Arg129, and Phe130–Lys165. 4 residues coordinate Ca(2+): Asp37, Asn39, Asp41, and Asp48. Phosphothreonine is present on Thr52.

Myosin is a hexamer of 2 heavy chains and 4 light chains. Interacts with MYOC. Post-translationally, N-terminus is methylated by METTL11A/NTM1. In terms of processing, phosphorylated by MYLK3 and MYLK2; promotes cardiac muscle contraction and function. Dephosphorylated by PPP1CB complexed to PPP1R12B. The phosphorylated form in adult is expressed as gradients across the heart from endocardium (low phosphorylation) to epicardium (high phosphorylation); regulates cardiac torsion and workload distribution.

It is found in the cytoplasm. It localises to the myofibril. Its subcellular location is the sarcomere. The protein localises to the a band. In terms of biological role, contractile protein that plays a role in heart development and function. Following phosphorylation, plays a role in cross-bridge cycling kinetics and cardiac muscle contraction by increasing myosin lever arm stiffness and promoting myosin head diffusion; as a consequence of the increase in maximum contraction force and calcium sensitivity of contraction force. These events altogether slow down myosin kinetics and prolong duty cycle resulting in accumulated myosins being cooperatively recruited to actin binding sites to sustain thin filament activation as a means to fine-tune myofilament calcium sensitivity to force. During cardiogenesis plays an early role in cardiac contractility by promoting cardiac myofibril assembly. The sequence is that of Myosin regulatory light chain 2, ventricular/cardiac muscle isoform from Oryctolagus cuniculus (Rabbit).